We begin with the raw amino-acid sequence, 108 residues long: Small ribosomal subunit protein eS25A (108 aa).

Residues 1 to 20 (MPPKQQLSKAAKAAAALAGG) show a composition bias toward low complexity. The interval 1–30 (MPPKQQLSKAAKAAAALAGGKKSKKKWSKK) is disordered. P2 bears the N,N-dimethylproline; by NTM1 mark. The span at 21–30 (KKSKKKWSKK) shows a compositional bias: basic residues.

It belongs to the eukaryotic ribosomal protein eS25 family. Component of the small ribosomal subunit (SSU). Mature yeast ribosomes consist of a small (40S) and a large (60S) subunit. The 40S small subunit contains 1 molecule of ribosomal RNA (18S rRNA) and 33 different proteins (encoded by 57 genes). The large 60S subunit contains 3 rRNA molecules (25S, 5.8S and 5S rRNA) and 46 different proteins (encoded by 81 genes).

Its subcellular location is the cytoplasm. Component of the ribosome, a large ribonucleoprotein complex responsible for the synthesis of proteins in the cell. The small ribosomal subunit (SSU) binds messenger RNAs (mRNAs) and translates the encoded message by selecting cognate aminoacyl-transfer RNA (tRNA) molecules. The large subunit (LSU) contains the ribosomal catalytic site termed the peptidyl transferase center (PTC), which catalyzes the formation of peptide bonds, thereby polymerizing the amino acids delivered by tRNAs into a polypeptide chain. The nascent polypeptides leave the ribosome through a tunnel in the LSU and interact with protein factors that function in enzymatic processing, targeting, and the membrane insertion of nascent chains at the exit of the ribosomal tunnel. This chain is Small ribosomal subunit protein eS25A, found in Saccharomyces cerevisiae (strain ATCC 204508 / S288c) (Baker's yeast).